Consider the following 74-residue polypeptide: ATP synthase subunit 9, mitochondrial (74 aa).

2 consecutive transmembrane segments (helical) span residues 8–28 (IGAGAATIALAGAAVGIGNVF) and 50–70 (ILGFALTEAIALFALMMAFLI).

Belongs to the ATPase C chain family. In terms of assembly, F-type ATPases have 2 components, CF(1) - the catalytic core - and CF(0) - the membrane proton channel. CF(1) has five subunits: alpha(3), beta(3), gamma(1), delta(1), epsilon(1). CF(0) has three main subunits: a, b and c.

It localises to the mitochondrion membrane. In terms of biological role, this protein is one of the chains of the nonenzymatic membrane component (F0) of mitochondrial ATPase. This Triticum aestivum (Wheat) protein is ATP synthase subunit 9, mitochondrial (ATP9).